The following is a 431-amino-acid chain: Histidinol dehydrogenase (431 aa).

NAD(+) is bound by residues Tyr130, Gln191, and Asn214. The substrate site is built by Ser237, Gln259, and His262. Residues Gln259 and His262 each contribute to the Zn(2+) site. Catalysis depends on proton acceptor residues Glu327 and His328. Residues His328, Asp361, Glu415, and His420 each coordinate substrate. Asp361 contacts Zn(2+). His420 lines the Zn(2+) pocket.

It belongs to the histidinol dehydrogenase family. Requires Zn(2+) as cofactor.

The enzyme catalyses L-histidinol + 2 NAD(+) + H2O = L-histidine + 2 NADH + 3 H(+). It functions in the pathway amino-acid biosynthesis; L-histidine biosynthesis; L-histidine from 5-phospho-alpha-D-ribose 1-diphosphate: step 9/9. Functionally, catalyzes the sequential NAD-dependent oxidations of L-histidinol to L-histidinaldehyde and then to L-histidine. The protein is Histidinol dehydrogenase of Syntrophotalea carbinolica (strain DSM 2380 / NBRC 103641 / GraBd1) (Pelobacter carbinolicus).